Here is a 59-residue protein sequence, read N- to C-terminus: Large ribosomal subunit protein uL30 (59 aa).

This sequence belongs to the universal ribosomal protein uL30 family. As to quaternary structure, part of the 50S ribosomal subunit.

This chain is Large ribosomal subunit protein uL30, found in Buchnera aphidicola subsp. Acyrthosiphon pisum (strain 5A).